Consider the following 628-residue polypeptide: ATP-dependent zinc metalloprotease FtsH 4 (628 aa).

The Cytoplasmic portion of the chain corresponds to 1 to 14 (MAIKPQPQWQRRLA). The chain crosses the membrane as a helical span at residues 15-35 (SVLLWGSTIYLLVNLLAPALF). Over 36-119 (RSQPPQVPYS…AAAPPAKNSW (84 aa)) the chain is Lumenal. A helical transmembrane segment spans residues 120-140 (FGTLLSWVIPPLIFVGIWSFF). Over 141 to 628 (LNRNNNGAPG…QVQAPGTLVV (488 aa)) the chain is Cytoplasmic. 214 to 221 (GPPGTGKT) lines the ATP pocket. Zn(2+) is bound at residue His438. Glu439 is a catalytic residue. Zn(2+) is bound by residues His442 and Asp515.

The protein in the central section; belongs to the AAA ATPase family. It in the C-terminal section; belongs to the peptidase M41 family. As to quaternary structure, homohexamer. Requires Zn(2+) as cofactor.

It is found in the cellular thylakoid membrane. Its function is as follows. Acts as a processive, ATP-dependent zinc metallopeptidase for both cytoplasmic and membrane proteins. Plays a role in the quality control of integral membrane proteins. This is ATP-dependent zinc metalloprotease FtsH 4 from Synechocystis sp. (strain ATCC 27184 / PCC 6803 / Kazusa).